Consider the following 156-residue polypeptide: Nascent polypeptide-associated complex subunit beta (156 aa).

2 disordered regions span residues 1 to 42 (MPID…KDDT) and 129 to 156 (QANE…AEVE). One can recognise an NAC-A/B domain in the interval 38–103 (NKDDTKLHNQ…AQEKNLQELF (66 aa)).

Belongs to the NAC-beta family. As to quaternary structure, part of the nascent polypeptide-associated complex (NAC), consisting of EGD2 and EGD1. NAC associates with ribosomes via EGD1.

Its subcellular location is the cytoplasm. It localises to the nucleus. Functionally, component of the nascent polypeptide-associated complex (NAC), a dynamic component of the ribosomal exit tunnel, protecting the emerging polypeptides from interaction with other cytoplasmic proteins to ensure appropriate nascent protein targeting. The NAC complex also promotes mitochondrial protein import by enhancing productive ribosome interactions with the outer mitochondrial membrane and blocks the inappropriate interaction of ribosomes translating non-secretory nascent polypeptides with translocation sites in the membrane of the endoplasmic reticulum. EGD1 may act as a transcription factor that exert a negative effect on the expression of several genes that are transcribed by RNA polymerase II. The sequence is that of Nascent polypeptide-associated complex subunit beta (EGD1) from Candida glabrata (strain ATCC 2001 / BCRC 20586 / JCM 3761 / NBRC 0622 / NRRL Y-65 / CBS 138) (Yeast).